The sequence spans 128 residues: Otoraplin (128 aa).

A signal peptide spans 1–18; the sequence is MARILILLLGGLVVLCAG. 2 disulfides stabilise this stretch: Cys32–Cys37 and Cys55–Cys127. One can recognise an SH3 domain in the interval 39–110; it reads YTISLARAQE…PSNLVKEQRV (72 aa).

This sequence belongs to the MIA/OTOR family. In terms of tissue distribution, highly expressed in cochlea.

The protein localises to the secreted. The polypeptide is Otoraplin (Otor) (Mus musculus (Mouse)).